The sequence spans 392 residues: Heat-inducible transcription repressor HrcA (392 aa).

This sequence belongs to the HrcA family.

Its function is as follows. Negative regulator of class I heat shock genes (grpE-dnaK-dnaJ and groELS operons). Prevents heat-shock induction of these operons. This Synechococcus sp. (strain JA-3-3Ab) (Cyanobacteria bacterium Yellowstone A-Prime) protein is Heat-inducible transcription repressor HrcA.